We begin with the raw amino-acid sequence, 378 residues long: Spermidine/putrescine import ATP-binding protein PotA (378 aa).

Residues 18–248 (VLLSGISKSF…PKNLFVAGFI (231 aa)) enclose the ABC transporter domain. 50–57 (GPSGCGKT) provides a ligand contact to ATP.

It belongs to the ABC transporter superfamily. Spermidine/putrescine importer (TC 3.A.1.11.1) family. The complex is composed of two ATP-binding proteins (PotA), two transmembrane proteins (PotB and PotC) and a solute-binding protein (PotD).

It is found in the cell inner membrane. The catalysed reaction is ATP + H2O + polyamine-[polyamine-binding protein]Side 1 = ADP + phosphate + polyamineSide 2 + [polyamine-binding protein]Side 1.. Part of the ABC transporter complex PotABCD involved in spermidine/putrescine import. Responsible for energy coupling to the transport system. In Salmonella paratyphi A (strain ATCC 9150 / SARB42), this protein is Spermidine/putrescine import ATP-binding protein PotA.